Here is a 259-residue protein sequence, read N- to C-terminus: MILERIVTDNLPDLERRKMRLPLAKLQELVLDIPYLPIDMAMKLKGRQVRLIAEVKKASPSKGIIRPDFDPVDIAGIYARNGASAISVLTEEHHFMGSLDNLKKIRESGVASKLPLLRKDFIHDPYQVYESRLYGADAILLIVAMLSPERLQELLSLSHKLGMKCLVEVHTRSELEIALESNARIIGLNNRDLHTFKIDLTVTERLRPLIPPECIVVSESGIQTRADISRLEELGVDAVLVGEALTASVDIAAKMRELL.

This sequence belongs to the TrpC family.

The enzyme catalyses 1-(2-carboxyphenylamino)-1-deoxy-D-ribulose 5-phosphate + H(+) = (1S,2R)-1-C-(indol-3-yl)glycerol 3-phosphate + CO2 + H2O. It functions in the pathway amino-acid biosynthesis; L-tryptophan biosynthesis; L-tryptophan from chorismate: step 4/5. In Dehalococcoides mccartyi (strain ATCC BAA-2266 / KCTC 15142 / 195) (Dehalococcoides ethenogenes (strain 195)), this protein is Indole-3-glycerol phosphate synthase.